The sequence spans 516 residues: tRNA-2-methylthio-N(6)-dimethylallyladenosine synthase (516 aa).

Residues 17 to 133 enclose the MTTase N-terminal domain; that stretch reads RSFEVRTFGC…LPSLLSRSEH (117 aa). [4Fe-4S] cluster contacts are provided by Cys-26, Cys-62, Cys-96, Cys-170, Cys-174, and Cys-177. In terms of domain architecture, Radical SAM core spans 156-392; that stretch reads RESAYAGWVS…LALQERISTE (237 aa). Residues 395-466 form the TRAM domain; that stretch reads AKLIGTEVEL…PFFLIADSGV (72 aa). 2 disordered regions span residues 409–438 and 492–516; these read SGGR…QGHV and GLGL…GCGC. Residues 412 to 438 show a composition bias toward basic and acidic residues; that stretch reads RKNDKTQRMTGRSRDGRLVHFDPQGHV.

The protein belongs to the methylthiotransferase family. MiaB subfamily. As to quaternary structure, monomer. The cofactor is [4Fe-4S] cluster.

The protein localises to the cytoplasm. The catalysed reaction is N(6)-dimethylallyladenosine(37) in tRNA + (sulfur carrier)-SH + AH2 + 2 S-adenosyl-L-methionine = 2-methylsulfanyl-N(6)-dimethylallyladenosine(37) in tRNA + (sulfur carrier)-H + 5'-deoxyadenosine + L-methionine + A + S-adenosyl-L-homocysteine + 2 H(+). Its function is as follows. Catalyzes the methylthiolation of N6-(dimethylallyl)adenosine (i(6)A), leading to the formation of 2-methylthio-N6-(dimethylallyl)adenosine (ms(2)i(6)A) at position 37 in tRNAs that read codons beginning with uridine. In Corynebacterium diphtheriae (strain ATCC 700971 / NCTC 13129 / Biotype gravis), this protein is tRNA-2-methylthio-N(6)-dimethylallyladenosine synthase.